The sequence spans 6548 residues: Epiplakin (6548 aa).

T33 is modified (phosphothreonine). Plectin repeat units follow at residues 41–78 (AALP…TGLG), 79–116 (LTLL…LELK), 117–154 (EKLL…RTLG), 155–192 (WRLL…KETW), 285–322 (RRYL…KGIA), 323–360 (LQLL…PELH), 362–398 (QLLV…QPLA), 399–436 (LRLL…EETR), and 437–470 (QRLS…PETG). The interaction with KRT5 stretch occupies residues 49 to 1123 (SIAGVYVEAS…KASGLHLLPL (1075 aa)). Residues 545 to 565 (SVEELAAELKNIVEQAAATAK) are a coiled coil. 5 Plectin repeats span residues 611–648 (QRYL…PGTA), 649–686 (LILL…PDVY), 687–724 (AKLL…RDHG), 725–762 (IRLL…QILN), and 766–800 (LDPS…SETG). Residues 851–886 (TEDRRRQLLQRYRQRKITLEQVTQLLEKEMRRWTDI) adopt a coiled-coil conformation. Plectin repeat units lie at residues 931 to 968 (HRYL…PSTA), 969 to 1006 (LALL…AEVY), 1007 to 1044 (GKLK…VEQA), 1224 to 1284 (QETL…TGLG), 1285 to 1322 (QQLL…MEQS), 1323 to 1360 (EHLR…QSEA), 1361 to 1398 (FPLL…EQTS), and 1402 to 1436 (TATG…ADTG). The residue at position 1551 (T1551) is a Phosphothreonine. Plectin repeat units lie at residues 1572–1609 (RRSL…PGTA), 1610–1647 (LVLL…KETY), 1648–1685 (MKLL…RDHG), 1686–1723 (IRLL…EEMN), and 1727–1761 (SDPS…PETG). An interaction with KRT5 region spans residues 1580 to 6545 (FIAGVLIQDT…PETGLLFLSL (4966 aa)). Residues 1819–1851 (RKLLREYRAQNIGLENLLEVITSTVEETEKQSQ) are a coiled coil. Plectin repeat units lie at residues 1898–1935 (RVYL…AGFA), 1936–1973 (AQML…EDLR), 1974–2011 (ERLV…REEA), 2012–2049 (LRLL…DDSL), 2225–2267 (KRYL…PGTA), 2268–2305 (LVLL…GEIQ), 2306–2343 (EKLL…RDHG), 2344–2381 (IRLL…EDMN), and 2385–2419 (ADPG…PETG). 2 positions are modified to phosphoserine: S2430 and S2508. The disordered stretch occupies residues 2578–2626 (AEETQESKPKPRDASLKQQDTGARGSGTSPDEGDAQDSSESARQQQEQT). Positions 2582 to 2592 (QESKPKPRDAS) are enriched in basic and acidic residues. 2 stretches are compositionally biased toward polar residues: residues 2593-2606 (LKQQ…SGTS) and 2615-2626 (SSESARQQQEQT). 5 Plectin repeats span residues 2740-2782 (KRYL…PGTA), 2783-2820 (LVLL…GEIQ), 2821-2858 (EKLL…RDHG), 2859-2896 (IRLL…EDMN), and 2900-2934 (ADPG…PETG). The tract at residues 2748–2940 (CIAGVLVPVQ…PETGFYMLQL (193 aa)) is interaction with KRT14. Positions 3093–3144 (AEETQESKPKPRDASLKQQDTGARGSGTSPDEGDAQDSSESARQQQEQTLRA) are disordered. Basic and acidic residues predominate over residues 3097–3107 (QESKPKPRDAS). 2 stretches are compositionally biased toward polar residues: residues 3108–3121 (LKQQ…SGTS) and 3130–3144 (SSES…TLRA). S3220 is subject to Phosphoserine. 5 Plectin repeats span residues 3255 to 3297 (KRYL…PGTA), 3298 to 3335 (LVLL…GEIQ), 3336 to 3373 (EKLL…RDHG), 3374 to 3411 (IRLL…EDMN), and 3415 to 3449 (ADPG…PETG). S3460 and S3538 each carry phosphoserine. A disordered region spans residues 3608 to 3659 (AEETQESKPKPRDASLKQQDTGARGSGTSPDEGDAQDSSESARQQQEQTLRA). Basic and acidic residues predominate over residues 3612-3622 (QESKPKPRDAS). Composition is skewed to polar residues over residues 3623-3636 (LKQQ…SGTS) and 3645-3659 (SSES…TLRA). S3735 is subject to Phosphoserine. Plectin repeat units follow at residues 3770 to 3812 (KRYL…PGTA), 3813 to 3850 (LVLL…GEIQ), 3851 to 3888 (EKLL…RDHG), 3889 to 3926 (IRLL…EDMN), and 3930 to 3964 (ADPG…PETG). S3975 and S4053 each carry phosphoserine. The segment at 4123–4174 (AEETQESKPKPRDASLKQQDTGARGSGTSPDEGDAQDSSESARQQQEQTLRA) is disordered. Basic and acidic residues predominate over residues 4127–4137 (QESKPKPRDAS). Polar residues-rich tracts occupy residues 4138–4151 (LKQQ…SGTS) and 4160–4174 (SSES…TLRA). 5 Plectin repeats span residues 4285 to 4327 (KRYL…PGTA), 4328 to 4365 (LVLL…GEIQ), 4366 to 4403 (EKLL…RDHG), 4404 to 4441 (IRLL…EDMN), and 4445 to 4479 (ADPG…PETG). The disordered stretch occupies residues 4638-4689 (AEETQESKPKPRDASLKQQDTGARGSGTSPDEGDAQDSSESARQQQEQTLRA). The span at 4642–4652 (QESKPKPRDAS) shows a compositional bias: basic and acidic residues. 2 stretches are compositionally biased toward polar residues: residues 4653 to 4666 (LKQQ…SGTS) and 4675 to 4689 (SSES…TLRA). S4765 is subject to Phosphoserine. 5 Plectin repeats span residues 4800-4842 (KRYL…PGTA), 4843-4880 (LVLL…GEIQ), 4881-4918 (EKLL…RDHG), 4919-4956 (IRLL…EDMN), and 4960-4994 (ADPG…PETG). Residues S5005 and S5083 each carry the phosphoserine modification. Residues 5153–5204 (AEETQESKPKPRDASLKQQDTGARGSGTSPDEGDAQDSSESARQQQEQTLRA) form a disordered region. A compositionally biased stretch (basic and acidic residues) spans 5157–5167 (QESKPKPRDAS). Polar residues-rich tracts occupy residues 5168 to 5181 (LKQQ…SGTS) and 5190 to 5204 (SSES…TLRA). Plectin repeat units follow at residues 5315-5357 (KRYL…PGTA), 5358-5395 (LVLL…GEIQ), 5396-5433 (EKLL…RDHG), 5434-5471 (IRLL…EDMN), and 5475-5509 (ADPG…PETG). A disordered region spans residues 5668-5719 (AEETQESKPKPRDASLKQQDTGARGSGTSPDEGDAQDSSESARQQQEQTLRA). Residues 5672–5682 (QESKPKPRDAS) show a composition bias toward basic and acidic residues. Polar residues-rich tracts occupy residues 5683–5696 (LKQQ…SGTS) and 5705–5719 (SSES…TLRA). S5795 carries the post-translational modification Phosphoserine. 5 Plectin repeats span residues 5830–5872 (KRYL…PGTA), 5873–5910 (LVLL…GEIQ), 5911–5948 (EKLL…RDHG), 5949–5986 (IRLL…EDMN), and 5990–6024 (ADPG…PETG). S6035 and S6113 each carry phosphoserine. The interval 6183-6234 (AEETQESKPKPRDASLKQQDTGARGSGTSPDEGDAQDSSESARQQQEQTLRA) is disordered. Residues 6187-6197 (QESKPKPRDAS) are compositionally biased toward basic and acidic residues. Polar residues-rich tracts occupy residues 6198 to 6211 (LKQQ…SGTS) and 6220 to 6234 (SSES…TLRA). S6310 is modified (phosphoserine). 5 Plectin repeats span residues 6345–6387 (KRYL…PGTA), 6388–6425 (LVLL…GEIQ), 6426–6463 (EKLL…KNHG), 6464–6501 (IRLL…QEMN), and 6505–6539 (ADPG…PETG).

This sequence belongs to the plakin or cytolinker family. As to quaternary structure, interacts with KRT5, KRT14 and KRT5/KRT14 heterotetramer; interacts preferentially with assembled filaments rather than keratin monomers. Interacts with KRT8 and KRT18 and KRT8/KRT18 heterotetramer; interacts preferentially with assembled filaments rather than keratin monomers. Interacts with KRT1, VIM and DES; interaction is stronger with KRT1 than with VIM or DES; interaction is dependent of higher-order structure of intermediate filament. As to expression, high levels in skin, small intestine and salivary gland. Lower levels in lung, uterus and liver. Not detected in brain, kidney, muscle, heart or spleen. In skin, expressed in all epidermal layers but not in the dermis. In intestine, expressed exclusively in the epithelial cell layer of the villi. In liver, expressed at hepatocyte margins. Around the region of the wound, expressed in the upper half of the epidermis. Weakly expressed on the basilar side of the suprabasal layer of the epidermis at the wound's edge. Expressed strongly in the upper layer of the epidermis, especially in larger keratinocytes. Expressed in undifferentiated primary keratinocytes. Strongly expressed in ductal cells, and also expressed in acinar cells. Expressed in hepatocytes and cholangiocytes.

It is found in the cytoplasm. Its subcellular location is the cytoskeleton. It localises to the apicolateral cell membrane. The protein resides in the basolateral cell membrane. The protein localises to the cell junction. It is found in the hemidesmosome. Its subcellular location is the tight junction. It localises to the cell projection. In terms of biological role, cytoskeletal linker protein that connects to intermediate filaments and controls their reorganization in response to stress. In response to mechanical stress like wound healing, is associated with the machinery for cellular motility by slowing down keratinocyte migration and proliferation and accelerating keratin bundling in proliferating keratinocytes thus contributing to tissue architecture. However in wound healing in corneal epithelium also positively regulates cell differentiation and proliferation and negatively regulates migration thereby controlling corneal epithelium morphogenesis and integrity. In response to cellular stress, plays a role in keratin filament reorganization, probably by protecting keratin filaments against disruption. During liver and pancreas injuries, plays a protective role by chaperoning disease-induced intermediate filament reorganization. The chain is Epiplakin from Mus musculus (Mouse).